We begin with the raw amino-acid sequence, 231 residues long: Small ribosomal subunit protein uS3 (231 aa).

The region spanning 39-107 (IRELLHKELK…DVVINIVEIR (69 aa)) is the KH type-2 domain.

The protein belongs to the universal ribosomal protein uS3 family. As to quaternary structure, part of the 30S ribosomal subunit. Forms a tight complex with proteins S10 and S14.

Its function is as follows. Binds the lower part of the 30S subunit head. Binds mRNA in the 70S ribosome, positioning it for translation. The protein is Small ribosomal subunit protein uS3 of Nitrobacter hamburgensis (strain DSM 10229 / NCIMB 13809 / X14).